Here is a 278-residue protein sequence, read N- to C-terminus: Thiazole synthase (278 aa).

The active-site Schiff-base intermediate with DXP is lysine 109. 1-deoxy-D-xylulose 5-phosphate contacts are provided by residues glycine 170, 197-198, and 219-220; these read AG and NT.

The protein belongs to the ThiG family. Homotetramer. Forms heterodimers with either ThiH or ThiS.

The protein localises to the cytoplasm. It carries out the reaction [ThiS sulfur-carrier protein]-C-terminal-Gly-aminoethanethioate + 2-iminoacetate + 1-deoxy-D-xylulose 5-phosphate = [ThiS sulfur-carrier protein]-C-terminal Gly-Gly + 2-[(2R,5Z)-2-carboxy-4-methylthiazol-5(2H)-ylidene]ethyl phosphate + 2 H2O + H(+). It functions in the pathway cofactor biosynthesis; thiamine diphosphate biosynthesis. In terms of biological role, catalyzes the rearrangement of 1-deoxy-D-xylulose 5-phosphate (DXP) to produce the thiazole phosphate moiety of thiamine. Sulfur is provided by the thiocarboxylate moiety of the carrier protein ThiS. In vitro, sulfur can be provided by H(2)S. This chain is Thiazole synthase, found in Cupriavidus necator (strain ATCC 17699 / DSM 428 / KCTC 22496 / NCIMB 10442 / H16 / Stanier 337) (Ralstonia eutropha).